A 98-amino-acid polypeptide reads, in one-letter code: NADH-ubiquinone oxidoreductase chain 4L (98 aa).

3 consecutive transmembrane segments (helical) span residues 2 to 22, 29 to 49, and 61 to 81; these read PSIS…MLVF, SLLC…LFIM, and ILLL…LVMV.

The protein belongs to the complex I subunit 4L family. As to quaternary structure, core subunit of respiratory chain NADH dehydrogenase (Complex I) which is composed of 45 different subunits.

The protein resides in the mitochondrion inner membrane. The catalysed reaction is a ubiquinone + NADH + 5 H(+)(in) = a ubiquinol + NAD(+) + 4 H(+)(out). Functionally, core subunit of the mitochondrial membrane respiratory chain NADH dehydrogenase (Complex I) which catalyzes electron transfer from NADH through the respiratory chain, using ubiquinone as an electron acceptor. Part of the enzyme membrane arm which is embedded in the lipid bilayer and involved in proton translocation. The polypeptide is NADH-ubiquinone oxidoreductase chain 4L (MT-ND4L) (Lepilemur sahamalazensis (Sahamalaza sportive lemur)).